A 416-amino-acid polypeptide reads, in one-letter code: Secreted RxLR effector protein 25 (416 aa).

Positions 1–20 are cleaved as a signal peptide; it reads MRSWLLLLVGLSSYFALSTS. Residues 49-88 carry the RxLR-dEER motif; the sequence is RKLRAPGGDTNTLKDSGKARREKKVWKLFCRVFLQLDDEK.

Belongs to the RxLR effector family.

Its subcellular location is the secreted. It is found in the host cytoplasm. The protein resides in the host nucleus. Effector that partially suppresses the tobacco programmed cell death induced by cell death-inducing proteins. The protein is Secreted RxLR effector protein 25 of Plasmopara viticola (Downy mildew of grapevine).